The sequence spans 218 residues: Large ribosomal subunit protein uL4 (218 aa).

Residues 54–106 (GTHAVKNRGAVSGGGRKPWKQKGTGRARQGSIRAPQWYHGGVAHGPVPRDYSQ) are disordered.

It belongs to the universal ribosomal protein uL4 family. Part of the 50S ribosomal subunit.

In terms of biological role, one of the primary rRNA binding proteins, this protein initially binds near the 5'-end of the 23S rRNA. It is important during the early stages of 50S assembly. It makes multiple contacts with different domains of the 23S rRNA in the assembled 50S subunit and ribosome. Its function is as follows. Forms part of the polypeptide exit tunnel. This chain is Large ribosomal subunit protein uL4, found in Bifidobacterium animalis subsp. lactis (strain AD011).